A 330-amino-acid polypeptide reads, in one-letter code: Lipoyl synthase (330 aa).

C77, C82, C88, C103, C107, C110, and S317 together coordinate [4Fe-4S] cluster. A Radical SAM core domain is found at 89-306; the sequence is FNHGTATFMI…RSEAERMGFE (218 aa).

The protein belongs to the radical SAM superfamily. Lipoyl synthase family. [4Fe-4S] cluster serves as cofactor.

The protein resides in the cytoplasm. It carries out the reaction [[Fe-S] cluster scaffold protein carrying a second [4Fe-4S](2+) cluster] + N(6)-octanoyl-L-lysyl-[protein] + 2 oxidized [2Fe-2S]-[ferredoxin] + 2 S-adenosyl-L-methionine + 4 H(+) = [[Fe-S] cluster scaffold protein] + N(6)-[(R)-dihydrolipoyl]-L-lysyl-[protein] + 4 Fe(3+) + 2 hydrogen sulfide + 2 5'-deoxyadenosine + 2 L-methionine + 2 reduced [2Fe-2S]-[ferredoxin]. The protein operates within protein modification; protein lipoylation via endogenous pathway; protein N(6)-(lipoyl)lysine from octanoyl-[acyl-carrier-protein]: step 2/2. Catalyzes the radical-mediated insertion of two sulfur atoms into the C-6 and C-8 positions of the octanoyl moiety bound to the lipoyl domains of lipoate-dependent enzymes, thereby converting the octanoylated domains into lipoylated derivatives. This chain is Lipoyl synthase, found in Actinobacillus pleuropneumoniae serotype 5b (strain L20).